A 127-amino-acid polypeptide reads, in one-letter code: Large-conductance mechanosensitive channel (127 aa).

A run of 3 helical transmembrane segments spans residues Glu-9 to Phe-29, Ile-32 to Val-52, and Val-75 to Leu-95.

The protein belongs to the MscL family. As to quaternary structure, homopentamer.

It localises to the cell inner membrane. In terms of biological role, channel that opens in response to stretch forces in the membrane lipid bilayer. May participate in the regulation of osmotic pressure changes within the cell. This Legionella pneumophila (strain Corby) protein is Large-conductance mechanosensitive channel.